The sequence spans 381 residues: MTVARPSVPAALPLLGELPRLLLLVLLCLPAVWGDCGLPPDVPNAQPALEGRTSFPEDTVITYKCEESFVKIPGEKDSVICLKGSQWSDIEEFCNRSCEVPTRLNSASLKQPYITQNYFPVGTVVEYECRPGYRREPSLSPKLTCLQNLKWSTAVEFCKKKSCPNPGEIRNGQIDVPGGILFGATISFSCNTGYKLFGSTSSFCLISGSSVQWSDPLPECREIYCPAPPQIDNGIIQGERDHYGYRQSVTYACNKGFTMIGEHSIYCTVNNDEGEWSGPPPECRGKSLTSKVPPTVQKPTTVNVPTTEVSPTSQKTTTKTTTPNAQATRSTPVSRTTKHFHETTPNKGSGTTSGTTRLLSGHTCFTLTGLLGTLVTMGLLT.

Positions Met-1–Gly-34 are cleaved as a signal peptide. Sushi domains lie at Asp-35–Arg-96, Arg-96–Lys-160, Lys-161–Glu-222, and Ile-223–Gly-285. 2 cysteine pairs are disulfide-bonded: Cys-36–Cys-81 and Cys-65–Cys-94. Residue Asn-95 is glycosylated (N-linked (GlcNAc...) asparagine). 6 disulfides stabilise this stretch: Cys-98–Cys-145, Cys-129–Cys-158, Cys-163–Cys-204, Cys-190–Cys-220, Cys-225–Cys-267, and Cys-253–Cys-283. The disordered stretch occupies residues Ser-277 to Gly-354. A compositionally biased stretch (polar residues) spans Ser-287–Val-309. Positions Ser-310–Thr-328 are enriched in low complexity. Ser-353 carries GPI-anchor amidated serine lipidation. A propeptide spans Gly-354–Thr-381 (removed in mature form).

It belongs to the receptors of complement activation (RCA) family. In terms of assembly, monomer (major form) and non-disulfide-linked, covalent homodimer (minor form). Interacts with ADGRE5. As to quaternary structure, (Microbial infection) Interacts with coxsackievirus A21, coxsackieviruses B1, B3 and B5 capsid proteins. (Microbial infection) Interacts with human enterovirus 70 and D68 capsid proteins. In terms of assembly, (Microbial infection) Interacts with human echoviruses 6, 7, 11, 12, 20 and 21 capsid proteins. The Ser/Thr-rich domain is heavily O-glycosylated. As to expression, expressed on the plasma membranes of all cell types that are in intimate contact with plasma complement proteins. It is also found on the surfaces of epithelial cells lining extracellular compartments, and variants of the molecule are present in body fluids and in extracellular matrix.

It localises to the cell membrane. Its subcellular location is the secreted. Functionally, this protein recognizes C4b and C3b fragments that condense with cell-surface hydroxyl or amino groups when nascent C4b and C3b are locally generated during C4 and c3 activation. Interaction of daf with cell-associated C4b and C3b polypeptides interferes with their ability to catalyze the conversion of C2 and factor B to enzymatically active C2a and Bb and thereby prevents the formation of C4b2a and C3bBb, the amplification convertases of the complement cascade. Inhibits complement activation by destabilizing and preventing the formation of C3 and C5 convertases, which prevents complement damage. In terms of biological role, (Microbial infection) Acts as a receptor for Coxsackievirus A21, coxsackieviruses B1, B3 and B5. Its function is as follows. (Microbial infection) Acts as a receptor for Human enterovirus 70 and D68. (Microbial infection) Acts as a receptor for Human echoviruses 6, 7, 11, 12, 20 and 21. This is Complement decay-accelerating factor (CD55) from Homo sapiens (Human).